A 340-amino-acid chain; its full sequence is 4-hydroxy-2-oxovalerate aldolase (340 aa).

One can recognise a Pyruvate carboxyltransferase domain in the interval 8–260 (VILHDMSLRD…HHGVNLYDIM (253 aa)). Residue 16–17 (RD) participates in substrate binding. Residue D17 participates in Mn(2+) binding. The active-site Proton acceptor is H20. S170 and H199 together coordinate substrate. Mn(2+)-binding residues include H199 and H201. Residue Y290 coordinates substrate.

This sequence belongs to the 4-hydroxy-2-oxovalerate aldolase family.

It carries out the reaction (S)-4-hydroxy-2-oxopentanoate = acetaldehyde + pyruvate. This is 4-hydroxy-2-oxovalerate aldolase from Shewanella halifaxensis (strain HAW-EB4).